A 292-amino-acid chain; its full sequence is Tissue factor (292 aa).

Positions methionine 1–alanine 32 are cleaved as a signal peptide. Residues alanine 33 to methionine 250 lie on the Extracellular side of the membrane. Fibronectin type-III domains lie at threonine 35 to asparagine 126 and glutamine 148 to threonine 240. N-linked (GlcNAc...) asparagine glycosylation is present at asparagine 41. Short sequence motifs (WKS motif) lie at residues tryptophan 44–serine 46 and tryptophan 75–serine 77. A disulfide bridge connects residues cysteine 79 and cysteine 87. Asparagine 114, asparagine 154, asparagine 167, and asparagine 182 each carry an N-linked (GlcNAc...) asparagine glycan. Cysteine 216 and cysteine 239 are oxidised to a cystine. Residues phenylalanine 251 to valine 271 traverse the membrane as a helical segment. The Cytoplasmic portion of the chain corresponds to tyrosine 272 to alanine 292. Cysteine 274 carries S-palmitoyl cysteine lipidation.

It belongs to the tissue factor family. As to quaternary structure, interacts with HSPE; the interaction, inhibited by heparin, promotes the generation of activated factor X and activates coagulation in the presence of activated factor VII. As to expression, brain, heart.

It is found in the membrane. Initiates blood coagulation by forming a complex with circulating factor VII or VIIa. The [TF:VIIa] complex activates factors IX or X by specific limited proteolysis. TF plays a role in normal hemostasis by initiating the cell-surface assembly and propagation of the coagulation protease cascade. This is Tissue factor (F3) from Oryctolagus cuniculus (Rabbit).